The following is a 317-amino-acid chain: Olfactory receptor 10A5 (317 aa).

The Extracellular segment spans residues 1-26; sequence MAIGNWTEISEFILMSFSSLPTEIQS. Asn5 carries N-linked (GlcNAc...) asparagine glycosylation. Residues 27–47 form a helical membrane-spanning segment; that stretch reads LLFLTFLTIYLVTLKGNSLII. Residues 48 to 55 are Cytoplasmic-facing; the sequence is LVTLADPM. Residues 56-76 form a helical membrane-spanning segment; that stretch reads LHSPMYFFLRNLSFLEIGFNL. Residues 77 to 100 are Extracellular-facing; that stretch reads VIVPKMLGTLLAQDTTISFLGCAT. The cysteines at positions 98 and 190 are disulfide-linked. Residues 101–121 form a helical membrane-spanning segment; the sequence is QMYFFFFFGVAECFLLATMAY. The Cytoplasmic portion of the chain corresponds to 122–140; the sequence is DRYVAICSPLHYPVIMNQR. The chain crosses the membrane as a helical span at residues 141–161; that stretch reads TRAKLAAASWFPGFPVATVQT. Topologically, residues 162 to 198 are extracellular; the sequence is TWLFSFPFCGTNKVNHFFCDSPPVLKLVCADTALFEI. Residues 199-218 form a helical membrane-spanning segment; the sequence is YAIVGTILVVMIPCLLILCS. The Cytoplasmic segment spans residues 219–238; it reads YTRIAAAILKIPSAKGKHKA. The helical transmembrane segment at 239-259 threads the bilayer; sequence FSTCSSHLLVVSLFYISSSLT. Residues 260–272 are Extracellular-facing; it reads YFWPKSNNSPESK. Residues 273 to 293 form a helical membrane-spanning segment; it reads KLLSLSYTVVTPMLNPIIYSL. The Cytoplasmic portion of the chain corresponds to 294–317; sequence RNSEVKNALSRTFHKVLALRNCIP.

The protein belongs to the G-protein coupled receptor 1 family. In terms of tissue distribution, expressed in the tongue.

The protein localises to the cell membrane. Its function is as follows. Odorant receptor (Potential). May be involved in taste perception. In Homo sapiens (Human), this protein is Olfactory receptor 10A5 (OR10A5).